We begin with the raw amino-acid sequence, 412 residues long: Squamosa promoter-binding-like protein 2 (412 aa).

The disordered stretch occupies residues Met-1–Ala-81. The span at Pro-18–Ala-31 shows a compositional bias: gly residues. 2 stretches are compositionally biased toward low complexity: residues Val-48–Ala-57 and Ser-67–Ala-81. An SBP-type zinc finger spans residues Val-89 to Pro-167. Positions 92, 97, 115, 118, 134, 137, 141, and 153 each coordinate Zn(2+). The Bipartite nuclear localization signal signature appears at Lys-150–Lys-166.

In terms of tissue distribution, expressed in stems, leaf sheaths, and young panicles.

The protein resides in the nucleus. Its function is as follows. Trans-acting factor that binds specifically to the consensus nucleotide sequence 5'-TNCGTACAA-3'. May be involved in panicle development. In Oryza sativa subsp. japonica (Rice), this protein is Squamosa promoter-binding-like protein 2 (SPL2).